The primary structure comprises 177 residues: Small ribosomal subunit protein uS5 (177 aa).

An S5 DRBM domain is found at 21-84 (LKEKMISVNR…DEARRGMIKI (64 aa)).

Belongs to the universal ribosomal protein uS5 family. In terms of assembly, part of the 30S ribosomal subunit. Contacts proteins S4 and S8.

In terms of biological role, with S4 and S12 plays an important role in translational accuracy. Functionally, located at the back of the 30S subunit body where it stabilizes the conformation of the head with respect to the body. In Nitrosomonas eutropha (strain DSM 101675 / C91 / Nm57), this protein is Small ribosomal subunit protein uS5.